We begin with the raw amino-acid sequence, 262 residues long: Phosphonates import ATP-binding protein PhnC (262 aa).

The region spanning 5 to 253 (IRVEKLAKTF…RFDHLYRSIN (249 aa)) is the ABC transporter domain. Residue 37–44 (GPSGSGKS) participates in ATP binding.

It belongs to the ABC transporter superfamily. Phosphonates importer (TC 3.A.1.9.1) family. In terms of assembly, the complex is composed of two ATP-binding proteins (PhnC), two transmembrane proteins (PhnE) and a solute-binding protein (PhnD).

The protein resides in the cell inner membrane. It catalyses the reaction phosphonate(out) + ATP + H2O = phosphonate(in) + ADP + phosphate + H(+). Functionally, part of the ABC transporter complex PhnCDE involved in phosphonates, phosphate esters, phosphite and phosphate import. Responsible for energy coupling to the transport system. The protein is Phosphonates import ATP-binding protein PhnC of Escherichia coli (strain K12).